A 569-amino-acid chain; its full sequence is Dihydroxy-acid dehydratase (569 aa).

D80 is a binding site for Mg(2+). A [2Fe-2S] cluster-binding site is contributed by C121. Mg(2+) contacts are provided by D122 and K123. K123 is modified (N6-carboxylysine). C194 serves as a coordination point for [2Fe-2S] cluster. Position 446 (E446) interacts with Mg(2+). S472 (proton acceptor) is an active-site residue.

Belongs to the IlvD/Edd family. In terms of assembly, homodimer. [2Fe-2S] cluster is required as a cofactor. Requires Mg(2+) as cofactor.

It catalyses the reaction (2R)-2,3-dihydroxy-3-methylbutanoate = 3-methyl-2-oxobutanoate + H2O. The catalysed reaction is (2R,3R)-2,3-dihydroxy-3-methylpentanoate = (S)-3-methyl-2-oxopentanoate + H2O. Its pathway is amino-acid biosynthesis; L-isoleucine biosynthesis; L-isoleucine from 2-oxobutanoate: step 3/4. It participates in amino-acid biosynthesis; L-valine biosynthesis; L-valine from pyruvate: step 3/4. Functions in the biosynthesis of branched-chain amino acids. Catalyzes the dehydration of (2R,3R)-2,3-dihydroxy-3-methylpentanoate (2,3-dihydroxy-3-methylvalerate) into 2-oxo-3-methylpentanoate (2-oxo-3-methylvalerate) and of (2R)-2,3-dihydroxy-3-methylbutanoate (2,3-dihydroxyisovalerate) into 2-oxo-3-methylbutanoate (2-oxoisovalerate), the penultimate precursor to L-isoleucine and L-valine, respectively. In Desulforudis audaxviator (strain MP104C), this protein is Dihydroxy-acid dehydratase.